We begin with the raw amino-acid sequence, 27 residues long: Defensin-like protein 2 (27 aa).

Q1 carries the post-translational modification Pyrrolidone carboxylic acid.

Belongs to the DEFL family. Forms oligomers in its native state.

Its function is as follows. Possesses some antifungal activity sensitive to inorganic cations and antibacterial activity against B.megaterium. The chain is Defensin-like protein 2 from Brassica campestris (Field mustard).